We begin with the raw amino-acid sequence, 296 residues long: MPYDSVYSEKRPPGTLRTAWRKFYSDASAMVGLYGCAGLAVLCIFGGWFAPYGIDQQFLGYQLLPPSWSRYGEVSFFLGTDDLGRDVLSRLLSGAAPTVGGAFVVTLAATICGLVLGTFAGATHGLRSAVLNHILDTLLAIPSLLLAIIVVAFAGPSLSHAMFAVWLALLPRMVRSIYSMVHDELEKEYVIAARLDGASTLNILWFAVMPNITAGLVTEITRALSMAILDIAALGFLDLGAQLPSPEWGAMLGDALELIYVAPWTVMLPGAAIMISVLLVNLLGDGVRRAIIAGVE.

At 1-28 the chain is on the cytoplasmic side; it reads MPYDSVYSEKRPPGTLRTAWRKFYSDAS. Residues 29–49 traverse the membrane as a helical segment; the sequence is AMVGLYGCAGLAVLCIFGGWF. Over 50–98 the chain is Periplasmic; that stretch reads APYGIDQQFLGYQLLPPSWSRYGEVSFFLGTDDLGRDVLSRLLSGAAPT. A helical transmembrane segment spans residues 99-119; sequence VGGAFVVTLAATICGLVLGTF. Residues 99 to 284 form the ABC transmembrane type-1 domain; the sequence is VGGAFVVTLA…ISVLLVNLLG (186 aa). Topologically, residues 120 to 133 are cytoplasmic; it reads AGATHGLRSAVLNH. A helical transmembrane segment spans residues 134–154; sequence ILDTLLAIPSLLLAIIVVAFA. Over 155–196 the chain is Periplasmic; it reads GPSLSHAMFAVWLALLPRMVRSIYSMVHDELEKEYVIAARLD. The helical transmembrane segment at 197–217 threads the bilayer; that stretch reads GASTLNILWFAVMPNITAGLV. Topologically, residues 218–222 are cytoplasmic; it reads TEITR. A helical transmembrane segment spans residues 223-243; it reads ALSMAILDIAALGFLDLGAQL. Topologically, residues 244–257 are periplasmic; it reads PSPEWGAMLGDALE. Residues 258–278 traverse the membrane as a helical segment; the sequence is LIYVAPWTVMLPGAAIMISVL. The Cytoplasmic segment spans residues 279–296; it reads LVNLLGDGVRRAIIAGVE.

The protein belongs to the binding-protein-dependent transport system permease family. OppBC subfamily.

The protein resides in the cell inner membrane. Its function is as follows. Involved in a peptide intake transport system that plays a role in the resistance to antimicrobial peptides. The sequence is that of Peptide transport system permease protein SapC (sapC) from Escherichia coli O6:H1 (strain CFT073 / ATCC 700928 / UPEC).